We begin with the raw amino-acid sequence, 274 residues long: Large ribosomal subunit protein uL2cy (274 aa).

Disordered stretches follow at residues M1–N25 and M223–K274. The span at K7 to N25 shows a compositional bias: polar residues.

This sequence belongs to the universal ribosomal protein uL2 family. As to quaternary structure, part of the 50S ribosomal subunit.

The protein resides in the plastid. It localises to the chloroplast. This chain is Large ribosomal subunit protein uL2cy (rpl2-B), found in Atropa belladonna (Belladonna).